A 455-amino-acid chain; its full sequence is tRNA modification GTPase MnmE (455 aa).

(6S)-5-formyl-5,6,7,8-tetrahydrofolate contacts are provided by R26, E86, and R125. Residues 222–376 (GLKTAIIGRP…VEEKINQIFF (155 aa)) form the TrmE-type G domain. Position 232 (N232) interacts with K(+). Residues 232 to 237 (NVGKSS), 251 to 257 (TDIAGTT), and 276 to 279 (DTAG) each bind GTP. S236 contributes to the Mg(2+) binding site. Positions 251, 253, and 256 each coordinate K(+). A Mg(2+)-binding site is contributed by T257. A (6S)-5-formyl-5,6,7,8-tetrahydrofolate-binding site is contributed by K455.

It belongs to the TRAFAC class TrmE-Era-EngA-EngB-Septin-like GTPase superfamily. TrmE GTPase family. As to quaternary structure, homodimer. Heterotetramer of two MnmE and two MnmG subunits. K(+) serves as cofactor.

The protein localises to the cytoplasm. In terms of biological role, exhibits a very high intrinsic GTPase hydrolysis rate. Involved in the addition of a carboxymethylaminomethyl (cmnm) group at the wobble position (U34) of certain tRNAs, forming tRNA-cmnm(5)s(2)U34. The protein is tRNA modification GTPase MnmE of Lactococcus lactis subsp. cremoris (strain MG1363).